We begin with the raw amino-acid sequence, 240 residues long: Biosynthetic peptidoglycan transglycosylase (240 aa).

Residues 12–31 traverse the membrane as a helical segment; it reads ALLWFAGGSVLLVLVFRFVP.

It belongs to the glycosyltransferase 51 family.

It localises to the cell inner membrane. It carries out the reaction [GlcNAc-(1-&gt;4)-Mur2Ac(oyl-L-Ala-gamma-D-Glu-L-Lys-D-Ala-D-Ala)](n)-di-trans,octa-cis-undecaprenyl diphosphate + beta-D-GlcNAc-(1-&gt;4)-Mur2Ac(oyl-L-Ala-gamma-D-Glu-L-Lys-D-Ala-D-Ala)-di-trans,octa-cis-undecaprenyl diphosphate = [GlcNAc-(1-&gt;4)-Mur2Ac(oyl-L-Ala-gamma-D-Glu-L-Lys-D-Ala-D-Ala)](n+1)-di-trans,octa-cis-undecaprenyl diphosphate + di-trans,octa-cis-undecaprenyl diphosphate + H(+). It functions in the pathway cell wall biogenesis; peptidoglycan biosynthesis. Its function is as follows. Peptidoglycan polymerase that catalyzes glycan chain elongation from lipid-linked precursors. This is Biosynthetic peptidoglycan transglycosylase from Pseudomonas fluorescens (strain Pf0-1).